The primary structure comprises 76 residues: Conotoxin Cal5a L1 (76 aa).

Positions 1–22 are cleaved as a signal peptide; that stretch reads MRFYIGLMAALMLTSILRTDSA. The propeptide occupies 23–42; that stretch reads SVDQTGAEGGLALIERVIRQ. P50 is modified (4-hydroxyproline). Position 58 is a 4-hydroxyproline; in form cal5a, and form cal5b (P58). Residue P62 is modified to 4-hydroxyproline; in form cal5a, form cal5b, and form cal5c. A 4-hydroxyproline; in form cal5a, form cal5b, form cal5c, and form cal5d modification is found at P64.

In terms of processing, contains 2 disulfide bonds that can be either 'C1-C3, C2-C4' or 'C1-C4, C2-C3', since these disulfide connectivities have been observed for conotoxins with cysteine framework V (for examples, see AC P0DQQ7 and AC P81755). Five different peptides have been described after total venom examination by HPLC-MS. Cal5a is the longest. Cal5b-Cal5e are identical in length but are differentially hydroxylated. It is possible that hydroxylation and proteolysis at position 53 are incomplete in some of these peptides. In terms of tissue distribution, expressed by the venom duct.

It localises to the secreted. In terms of biological role, probable neurotoxin with unknown target. Possibly targets ion channels. The protein is Conotoxin Cal5a L1 of Californiconus californicus (California cone).